The primary structure comprises 277 residues: Transcription antiterminator LicT (277 aa).

2 PRD domains span residues 65–170 and 171–277; these read DIPI…EEMP and NIIN…VKQA.

The protein belongs to the transcriptional antiterminator BglG family. In terms of processing, phosphorylated.

In terms of biological role, mediates positive regulation of the glucanase operon (licST) by functioning as an antiterminator factor of transcription. Prevents termination at terminator lic-t. In Bacillus subtilis (strain 168), this protein is Transcription antiterminator LicT (licT).